A 69-amino-acid chain; its full sequence is Putative F-box protein At2g33705 (69 aa).

The F-box domain maps to 14-59 (GVNLEQIPYDLVLEILLKLSAKSIARFRCVSKLWDSTFRSRYFTEL).

The sequence is that of Putative F-box protein At2g33705 from Arabidopsis thaliana (Mouse-ear cress).